The sequence spans 551 residues: Tetrachloroethene reductive dehalogenase (551 aa).

Residues 1–39 (MGEINRRNFLKASMLGAAAAAVASASAVKGMVSPLVADA) constitute a signal peptide (tat-type signal). The 4Fe-4S ferredoxin-type 1 domain occupies 411 to 440 (PRKFGVREFCRLCKKCADACPAQAISHEKD). 8 residues coordinate [4Fe-4S] cluster: Cys420, Cys423, Cys426, Cys430, Cys467, Cys478, Cys481, and Cys485. In terms of domain architecture, 4Fe-4S ferredoxin-type 2 spans 478–496 (CANCVAVCSWNKVETWNHD).

This sequence belongs to the PceA family. Monomer. [4Fe-4S] cluster serves as cofactor. Requires corrinoid as cofactor. In terms of processing, predicted to be exported by the Tat system. The position of the signal peptide cleavage has been experimentally proven.

It is found in the cell membrane. It carries out the reaction trichloroethene + chloride + A + H(+) = tetrachloroethene + AH2. The enzyme catalyses trichloroethene + AH2 = (Z)-1,2-dichloroethene + chloride + A + H(+). Its activity is regulated as follows. Activity is inhibited by ammonium ions. Photoreversibly inactivated by 1-iodopropane. Functionally, catalyzes the reductive dechlorination of tetrachloroethene (PCE) to trichloroethene (TCE) and of trichloroethene to cis-1,2-dichloroethene (DCE). Can also use trichlorofluoroethene, tetrachloromethane, hexachloroethane, tetrachloroethane, trichloroethane and 1,1,1-trichloro-2,2,2-trifluoroethane. Menaquinone can act as the electron donor. Reduced methyl viologen can act as the artificial electron donor. The polypeptide is Tetrachloroethene reductive dehalogenase (Dehalobacter restrictus (strain DSM 9455 / PER-K23)).